Consider the following 529-residue polypeptide: Berberine bridge enzyme-like 7 (529 aa).

A signal peptide spans 1-19 (MKEALSILCLALLVSVSEA). Cys-32 and Cys-95 are oxidised to a cystine. The N-linked (GlcNAc...) asparagine glycan is linked to Asn-52. Positions 69–247 (YSSPNFKKLL…LSWKINLVKV (179 aa)) constitute an FAD-binding PCMH-type domain. The segment at residues 110–172 (HDLEGLSYRS…QTLAFPAGVC (63 aa)) is a cross-link (6-(S-cysteinyl)-8alpha-(pros-histidyl)-FAD (His-Cys)). N-linked (GlcNAc...) asparagine glycans are attached at residues Asn-257, Asn-341, and Asn-439.

It belongs to the oxygen-dependent FAD-linked oxidoreductase family. It depends on FAD as a cofactor. The FAD cofactor is bound via a bicovalent 6-S-cysteinyl, 8alpha-N1-histidyl FAD linkage.

The protein localises to the secreted. Its subcellular location is the cell wall. Probable flavin-dependent oxidoreductase. The polypeptide is Berberine bridge enzyme-like 7 (Arabidopsis thaliana (Mouse-ear cress)).